A 517-amino-acid polypeptide reads, in one-letter code: MGSESLVHVFLVSFPGQGHVNPLLRLGKRLASKGLLVTFTTPESIGKQMRKASNIGEEPSPIGDGFIRFEFFEDGWDEDEPRRQDLDQYLPQLEKVGKEVIPRMIKKNEEQNRPVSCLINNPFIPWVSDVAESLGLPSAMLWVQSCACFAAYYHYYHGLVPFPSESAMEIDVQLPCMPLLKHDEVPSFLYPTTPYPFLRRAIMGQYKNLDKPFCVLMDTFQELEHEIIEYMSKICPIKTVGPLFKNPKAPNANVRGDFMKADDCISWLDSKPPASVVYVSFGSVVYLKQDQWDEIAFGLLNSGLNFLWVMKPPHKDSGYQLLTLPEGFLEKAGDKGKVVQWSPQEQVLAHPSVACFVTHCGWNSSMEALSSGMPVVAFPQWGDQVTDAKYLVDVFKVGVRMCRGEAENKLIMRDVVEKCLLEATVGPKAAEVKENALKWKAAAEAAVAEGGSSDRNIQAFVDEVKRRSIAIQSNKSEPKPVVQNAAVADHFGAKATTNGVAADLAGSNADGKVELVA.

Residue H19 is the Proton acceptor of the active site. H19 provides a ligand contact to an anthocyanidin. UDP-alpha-D-glucose contacts are provided by Q344, H359, W362, N363, S364, and E367. G382 serves as a coordination point for an anthocyanidin. UDP-alpha-D-glucose is bound by residues D383 and Q384.

Belongs to the UDP-glycosyltransferase family. As to expression, highly expressed in leaf. Also expressed in peel, stem, root and aril.

It is found in the cytoplasm. It catalyses the reaction 3,4,5-trihydroxybenzoate + UDP-alpha-D-glucose = 1-O-galloyl-beta-D-glucose + UDP. The enzyme catalyses 3,4-dihydroxybenzoate + UDP-alpha-D-glucose = 1-O-(3,4-dihydroxy-benzoyl)-beta-D-glucose + UDP. It carries out the reaction 4-hydroxybenzoate + UDP-alpha-D-glucose = 4-(beta-D-glucosyloxy)benzoate + UDP + H(+). The catalysed reaction is (E)-cinnamate + UDP-alpha-D-glucose = 1-O-(trans-cinnamoyl)-beta-D-glucose + UDP. It catalyses the reaction (E)-sinapate + UDP-alpha-D-glucose = 1-O-(trans-sinapoyl)-beta-D-glucose + UDP. The enzyme catalyses (E)-4-coumarate + UDP-alpha-D-glucose = 1-O-(trans-4-coumaroyl)-beta-D-glucose + UDP. It carries out the reaction (E)-caffeate + UDP-alpha-D-glucose = 1-O-[(E)-caffeoyl]-beta-D-glucose + UDP. The catalysed reaction is (E)-ferulate + UDP-alpha-D-glucose = 1-O-[(E)-feruloyl]-beta-D-glucose + UDP. It catalyses the reaction genistein + UDP-alpha-D-glucose = genistein 7-O-beta-D-glucoside + UDP + H(+). The enzyme catalyses apigenin + UDP-alpha-D-glucose = apigenin 7-O-beta-D-glucoside + UDP + H(+). It carries out the reaction luteolin + UDP-alpha-D-glucose = luteolin 7-O-beta-D-glucoside + UDP + H(+). Glucosyltransferase that catalyzes the formation of 1-O-beta-D-glucose esters with hydroxybenzoic acids and cinnamic acid including its derivatives as preferred glucosyl acceptors. Has significant activity with gallic acid (3,4,5-trihydroxybenzoic acid), 3,4-dihydroxybenzoic acid, 4-hydroxybenzoic acid, cinnamic acid, sinapic acid, coumaric acid, caffeic acid and ferulic acid in vitro. Gallic acid is the predicted native substrate of the enzyme, which thus catalyzes the formation of 1-O-galloyl-beta-D-glucose, the first committed step of hydrolyzable tannins (HTs) biosynthesis, with punicalagin isomers being the major HTs of pomegranate. Catalyzes the formation of flavonoid glucosides with genistein, apigenin and luteolin in vitro. Has low activity with benzoic acid, 2-hydroxybenzoic acid, 3-hydroxybenzoic acid, 2,4-dihydroxybenzoic acid, naringenin and quercetin. No activity with catechol, resveratrol, chlorogenic acid, catechin and epicatechin (building blocks of proanthocyanidins) or cyanidin, delphinidin and pelargonidin (the three anthocyanidins). The polypeptide is Gallate 1-beta-glucosyltransferase 84A24 (Punica granatum (Pomegranate)).